We begin with the raw amino-acid sequence, 145 residues long: Thioredoxin C-3 (145 aa).

The heme site is built by Cys25, Cys28, and His29. The Thioredoxin domain maps to 29–140 (HQALLPLEPI…LQQWLDQQLQ (112 aa)). Cysteines 65 and 68 form a disulfide.

The protein belongs to the thioredoxin family.

Participates in various redox reactions through the reversible oxidation of its active center dithiol to a disulfide and catalyzes dithiol-disulfide exchange reactions. In Corynebacterium nephridii, this protein is Thioredoxin C-3.